A 314-amino-acid chain; its full sequence is 4-hydroxy-3-methylbut-2-enyl diphosphate reductase (314 aa).

Residue C12 participates in [4Fe-4S] cluster binding. H41 and H74 together coordinate (2E)-4-hydroxy-3-methylbut-2-enyl diphosphate. Residues H41 and H74 each coordinate dimethylallyl diphosphate. Isopentenyl diphosphate contacts are provided by H41 and H74. Residue C96 coordinates [4Fe-4S] cluster. Residue H124 participates in (2E)-4-hydroxy-3-methylbut-2-enyl diphosphate binding. Dimethylallyl diphosphate is bound at residue H124. H124 contacts isopentenyl diphosphate. E126 serves as the catalytic Proton donor. A (2E)-4-hydroxy-3-methylbut-2-enyl diphosphate-binding site is contributed by T167. Position 197 (C197) interacts with [4Fe-4S] cluster. The (2E)-4-hydroxy-3-methylbut-2-enyl diphosphate site is built by S225, S226, N227, and S269. S225, S226, N227, and S269 together coordinate dimethylallyl diphosphate. The isopentenyl diphosphate site is built by S225, S226, N227, and S269.

Belongs to the IspH family. The cofactor is [4Fe-4S] cluster.

The catalysed reaction is isopentenyl diphosphate + 2 oxidized [2Fe-2S]-[ferredoxin] + H2O = (2E)-4-hydroxy-3-methylbut-2-enyl diphosphate + 2 reduced [2Fe-2S]-[ferredoxin] + 2 H(+). The enzyme catalyses dimethylallyl diphosphate + 2 oxidized [2Fe-2S]-[ferredoxin] + H2O = (2E)-4-hydroxy-3-methylbut-2-enyl diphosphate + 2 reduced [2Fe-2S]-[ferredoxin] + 2 H(+). The protein operates within isoprenoid biosynthesis; dimethylallyl diphosphate biosynthesis; dimethylallyl diphosphate from (2E)-4-hydroxy-3-methylbutenyl diphosphate: step 1/1. It participates in isoprenoid biosynthesis; isopentenyl diphosphate biosynthesis via DXP pathway; isopentenyl diphosphate from 1-deoxy-D-xylulose 5-phosphate: step 6/6. Its function is as follows. Catalyzes the conversion of 1-hydroxy-2-methyl-2-(E)-butenyl 4-diphosphate (HMBPP) into a mixture of isopentenyl diphosphate (IPP) and dimethylallyl diphosphate (DMAPP). Acts in the terminal step of the DOXP/MEP pathway for isoprenoid precursor biosynthesis. This chain is 4-hydroxy-3-methylbut-2-enyl diphosphate reductase, found in Glaesserella parasuis serovar 5 (strain SH0165) (Haemophilus parasuis).